A 97-amino-acid polypeptide reads, in one-letter code: Small ribosomal subunit protein bS20 (97 aa).

Belongs to the bacterial ribosomal protein bS20 family.

Its function is as follows. Binds directly to 16S ribosomal RNA. This chain is Small ribosomal subunit protein bS20, found in Prochlorococcus marinus (strain MIT 9515).